The chain runs to 241 residues: Polycomb group RING finger protein 3 (241 aa).

Residues 17 to 56 form an RING-type zinc finger; sequence CRLCSGYLIDATTVTECLHTFCRSCLVKYLEENNTCPTCR. A disordered region spans residues 115-148; the sequence is AKQHLDPRNGETKADDNSNKETAEEKQEEDNDYH. Basic and acidic residues predominate over residues 117 to 139; sequence QHLDPRNGETKADDNSNKETAEE. The interval 131-241 is interaction with BCORL1; it reads NSNKETAEEK…LHYRPKMDLL (111 aa).

In terms of assembly, component of a PRC1-like complex that contains PCGF3, RNF2 and RYBP. Interacts with RNF2. Interacts with CBX6, CBX7 and CBX8. Interacts with BCORL1.

It localises to the nucleus. The protein resides in the nucleoplasm. In terms of biological role, component of a Polycomb group (PcG) multiprotein PRC1-like complex, a complex class required to maintain the transcriptionally repressive state of many genes, including Hox genes, throughout development. PcG PRC1 complex acts via chromatin remodeling and modification of histones; it mediates monoubiquitination of histone H2A 'Lys-119', rendering chromatin heritably changed in its expressibility. Within the PRC1-like complex, regulates RNF2 ubiquitin ligase activity. Plays a redundant role with PCGF5 as part of a PRC1-like complex that mediates monoubiquitination of histone H2A 'Lys-119' on the X chromosome and is required for normal silencing of one copy of the X chromosome in XX females. The polypeptide is Polycomb group RING finger protein 3 (PcgF3) (Mus musculus (Mouse)).